The following is a 141-amino-acid chain: MKLFIFLALFGAAFAQRNGFCRLPAEPGICRAFIPRYYFDVEKGQCEEFIYGGCKGNENNFETLKECKDACTEPEKASDFEKADFETGCKPAPETGHCLASHERWFFNTASGECEAFTYGGCGGNDNNYESKEECEFACKY.

Residues 1–15 form the signal peptide; the sequence is MKLFIFLALFGAAFA. BPTI/Kunitz inhibitor domains follow at residues 21–71 and 89–139; these read CRLP…KDAC and CKPA…EFAC. 6 disulfides stabilise this stretch: C21–C71, C30–C54, C46–C67, C89–C139, C98–C122, and C114–C135.

Highly expressed in midgut. Expressed in salivary gland, hemolymph and ovary.

Its subcellular location is the secreted. Anticoagulant protein that targets host intrinsic blood coagulation pathway. Inhibits host fibrinogen coagulation. Inhibits host thrombin (F2), cathepsin G (CTSG) but not trypsin. May play a role in keeping the blood meal in liquid form in the gut. The sequence is that of Doenitin-1 from Haemaphysalis doenitzi (Tick).